Here is a 494-residue protein sequence, read N- to C-terminus: Truncated non-functional calcium-binding mitochondrial carrier SAL1-1 (494 aa).

An EF-hand 1 domain is found at 11–46 (QRDIRYACLFKELDVKGNGQVTLDNLISAFEKNDHP). K65, D70, D93, D95, D97, K99, and E104 together coordinate Ca(2+). EF-hand domains are found at residues 80-115 (NAESQIWNGFQRIDLDHDGKIGINEINRYLSDLDNQ), 120-155 (NELNHELSNEKVNKFSRFFEWAFPKRKANIALRGQA), and 156-191 (SHKKNTDNDRSKKTTDSDLYVTYDQWRDFLLLVPRK). Positions 161 and 166 each coordinate Ca(2+). Solcar repeat units follow at residues 225–332 (IRGF…TKKI) and 345–434 (LSKF…LKKM). 5 helical membrane-spanning segments follow: residues 231-248 (FIAGGISGVISRTCTAPF), 307-326 (GNGLNVIKVFPESSIKFGSF), 355-368 (GLAGMAAQFSVYPI), 409-428 (RCHSRYSGHISLCCIRFGDF), and 458-475 (TSNGCIQWNCRSFCCLSN). One copy of the Solcar 3; truncated repeat lies at 452 to 494 (SKQPGCTSNGCIQWNCRSFCCLSNQSFKNKTTSPRNICTSLCV).

The protein belongs to the mitochondrial carrier (TC 2.A.29) family.

The protein localises to the mitochondrion inner membrane. Its function is as follows. Calcium-dependent mitochondrial solute carrier. This is Truncated non-functional calcium-binding mitochondrial carrier SAL1-1 (SAL1) from Saccharomyces cerevisiae (strain ATCC 204508 / S288c) (Baker's yeast).